The primary structure comprises 473 residues: MTVDTITSTSNGNQDVPKEFFPKEFETQLLHVGRFPDILGSCAVPVYSSAAFEFNSVAHGARLLNLTQFGNIYSRFTNPTVNVLQNRLAGLEGGVAACAVASGSAAVVVTVMALAGVGDNFVSSFHVHAGTFHQFESLAKQMGIECRFVKSRDPADFAAAIDDKTKFVWLETISNPGNVILDLEAVSMVCHTKGIPLICDNTFGCAGYFCRPINHGVDIVVHSATKWIGGHGTTVGGVIVDGGTFDWGQHPDRFPQFHDPRTRLWERFSRRAFAVRCQFEILRDTGSTLSAPAAQQLLVGLESLAVRCERHAQNAAKIADWLREHPLVAWVSYVGHPNHPDHQGALKYLKRGFGSVICFGLRGGFEAGALFCDALKMVITTTNLGDAKTLILHPASTTHEHFSSEHRAEAGVTDDMIRLSVGIEQIKDIKADFEQAFEQVLRGKKSLRKPCIGKILLQDEINEDLFGPSACRT.

Lys226 carries the post-translational modification N6-(pyridoxal phosphate)lysine.

This sequence belongs to the trans-sulfuration enzymes family. Pyridoxal 5'-phosphate is required as a cofactor.

Its pathway is alkaloid biosynthesis. Its function is as follows. Sulfhydrylase-like protein; part of the gene cluster that mediates the biosynthesis of loline alkaloids, potent insecticidal agents composed of a pyrrolizidine ring system and an uncommon ether bridge linking carbons 2 and 7. Lolines are structurally differentiated by the various modifications of the L-amino group and include norloline, loline, N-methylloline, N-acetylloline, N-acetylnorloline, and N-formylloline. The first committed step is the condensation of O-acetyl-L-homoserine (derived from L-aspartic acid) and L-proline, probably catalyzed by the gamma-type pyridoxal 5'-phosphate(PLP)-dependent enzyme lolC, to give the diamino diacid, NACPP. Ensuing cyclization, decarboxylation, and acetylation steps yield 1-exo-acetamidopyrrolizidine (AcAP). LolO is required for installation of the ether bridge upon the pathway intermediate, 1-exo-acetamidopyrrolizidine (AcAP). In sequential 2-oxoglutarate- and O(2)-consuming steps, lolO removes hydrogens from C2 and C7 of AcAP to form both carbon-oxygen bonds in N-acetylnorloline (NANL), the precursor to all other lolines. The enzymes lolD, lolE, lolF and lolT have also been proposed to be involved in the ether-bridge installation. Further processing of the exocyclic moiety of NANL by fungal N-acetamidase (LolN), methyltransferase (LolM), and cytochrome P450 (LolP) enzymes, with occasional involvement of a plant acetyltransferase, generates the other known lolines. LolN transforms NANL to norlonine which is monomethylated and dimethylated to respectively lonine and N-methyllonine (NML) by lolM. LolP catalyzes hydroxylation of the methyl group in N-methylloline (NML) and further oxygenation to N-formylloline (NFL). A plant acetyltransferase is responsible for the acetylation of loline to form N-acetylloline (NAL). LolA might interact with aspartate kinase to prevent feedback inhibition of its activity by these end products and thereby promote production of L-homoserine from L-aspartate. The polypeptide is Sulfhydrylase-like protein lolC1 (Epichloe uncinata (Endophyte fungus)).